The chain runs to 211 residues: Protein-L-isoaspartate O-methyltransferase (211 aa).

Residue S60 is part of the active site.

It belongs to the methyltransferase superfamily. L-isoaspartyl/D-aspartyl protein methyltransferase family.

It localises to the cytoplasm. It carries out the reaction [protein]-L-isoaspartate + S-adenosyl-L-methionine = [protein]-L-isoaspartate alpha-methyl ester + S-adenosyl-L-homocysteine. Catalyzes the methyl esterification of L-isoaspartyl residues in peptides and proteins that result from spontaneous decomposition of normal L-aspartyl and L-asparaginyl residues. It plays a role in the repair and/or degradation of damaged proteins. This Pseudomonas syringae pv. syringae (strain B728a) protein is Protein-L-isoaspartate O-methyltransferase.